Here is a 256-residue protein sequence, read N- to C-terminus: Triosephosphate isomerase (256 aa).

Position 9-11 (9-11) interacts with substrate; the sequence is NWK. The active-site Electrophile is H96. E168 acts as the Proton acceptor in catalysis. Residues S213 and 234-235 contribute to the substrate site; that span reads GG.

This sequence belongs to the triosephosphate isomerase family. As to quaternary structure, homodimer.

It localises to the cytoplasm. The catalysed reaction is D-glyceraldehyde 3-phosphate = dihydroxyacetone phosphate. The protein operates within carbohydrate biosynthesis; gluconeogenesis. It functions in the pathway carbohydrate degradation; glycolysis; D-glyceraldehyde 3-phosphate from glycerone phosphate: step 1/1. Involved in the gluconeogenesis. Catalyzes stereospecifically the conversion of dihydroxyacetone phosphate (DHAP) to D-glyceraldehyde-3-phosphate (G3P). This Baumannia cicadellinicola subsp. Homalodisca coagulata protein is Triosephosphate isomerase.